Consider the following 639-residue polypeptide: 3D-(3,5/4)-trihydroxycyclohexane-1,2-dione hydrolase (639 aa).

Residue E62 coordinates thiamine diphosphate. The segment at 438-518 (SLPGDLQRMW…INILLFDNCG (81 aa)) is thiamine pyrophosphate binding. D489 and N516 together coordinate Mg(2+).

Belongs to the TPP enzyme family. The cofactor is Mg(2+). Thiamine diphosphate serves as cofactor.

The enzyme catalyses 3D-3,5/4-trihydroxycyclohexane-1,2-dione + H2O = 5-deoxy-D-glucuronate + H(+). It participates in polyol metabolism; myo-inositol degradation into acetyl-CoA; acetyl-CoA from myo-inositol: step 3/7. Functionally, involved in the cleavage of the C1-C2 bond of 3D-(3,5/4)-trihydroxycyclohexane-1,2-dione (THcHDO) to yield 5-deoxy-glucuronate (5DG). This is 3D-(3,5/4)-trihydroxycyclohexane-1,2-dione hydrolase from Clostridium perfringens (strain 13 / Type A).